A 309-amino-acid polypeptide reads, in one-letter code: uncharacterized protein (309 aa).

Composition is skewed to pro residues over residues 1-17 and 24-51; these read MTSR…PSPP and SPVP…PTPR. 2 disordered regions span residues 1 to 174 and 216 to 240; these read MTSR…PPGV and PPDL…PLHA. A compositionally biased stretch (low complexity) spans 67–83; it reads LRSSPSSALNASRGAPS. The span at 84–112 shows a compositional bias: pro residues; the sequence is TSPPPSSSPPSSPASTPPSRTPSPTPTAP. Low complexity-rich tracts occupy residues 113 to 125 and 135 to 144; these read ASPV…TPAS and APSSSAALSS. The span at 160-174 shows a compositional bias: pro residues; sequence PPPPLPPPLQPPPGV. Residues 278–298 traverse the membrane as a helical segment; it reads LFLLFTLLSIHFSPFPIFILL.

The protein resides in the host membrane. This is an uncharacterized protein from Vitis vinifera (Grape).